We begin with the raw amino-acid sequence, 1079 residues long: BRD4-interacting chromatin-remodeling complex-associated protein-like (1079 aa).

2 disordered regions span residues 51 to 79 (NSSN…LPLS) and 509 to 604 (LHLS…TPGT). Positions 68-79 (LGEGPSDGLPLS) are enriched in low complexity. Residues 544 to 576 (SSASTAHPSLGSAVQSGSSGSNFTGDQLTQPNR) show a composition bias toward polar residues. Residues 590-604 (SSSKSTSTFSNTPGT) are compositionally biased toward low complexity. Serine 623 is subject to Phosphoserine. Disordered stretches follow at residues 669–691 (EKVV…GGQK), 837–877 (TQFG…NHDQ), and 917–954 (TSEE…TESK). Basic and acidic residues-rich tracts occupy residues 918 to 928 (SEEKASRREPL) and 938 to 952 (EGHR…HGTE). The residue at position 980 (serine 980) is a Phosphoserine.

Component of the multiprotein chromatin-remodeling complexes SWI/SNF: SWI/SNF-A (BAF), SWI/SNF-B (PBAF) and related complexes. The canonical complex contains a catalytic subunit (either SMARCA4/BRG1/BAF190A or SMARCA2/BRM/BAF190B) and at least SMARCE1, ACTL6A/BAF53, SMARCC1/BAF155, SMARCC2/BAF170, and SMARCB1/SNF5/BAF47. Other subunits specific to each of the complexes may also be present permitting several possible combinations developmentally and tissue specific. Component of the SWI/SNF (GBAF) subcomplex, which includes at least BICRA or BICRAL (mutually exclusive), BRD9, SS18, the core BAF subunits, SMARCA2/BRM, SMARCA4/BRG1/BAF190A, ACTL6A/BAF53, SMARCC1/BAF155, and SMARCD1/BAF60A.

Component of SWI/SNF chromatin remodeling subcomplex GBAF that carries out key enzymatic activities, changing chromatin structure by altering DNA-histone contacts within a nucleosome in an ATP-dependent manner. This chain is BRD4-interacting chromatin-remodeling complex-associated protein-like, found in Homo sapiens (Human).